The chain runs to 384 residues: 1-deoxy-D-xylulose 5-phosphate reductoisomerase (384 aa).

T10, G11, S12, I13, G36, N38, and N122 together coordinate NADPH. Residue K123 participates in 1-deoxy-D-xylulose 5-phosphate binding. E124 contributes to the NADPH binding site. D148 lines the Mn(2+) pocket. The 1-deoxy-D-xylulose 5-phosphate site is built by S149, E150, S174, and H197. E150 is a binding site for Mn(2+). G203 lines the NADPH pocket. S210, N215, K216, and E219 together coordinate 1-deoxy-D-xylulose 5-phosphate. E219 is a Mn(2+) binding site.

It belongs to the DXR family. It depends on Mg(2+) as a cofactor. Requires Mn(2+) as cofactor.

It carries out the reaction 2-C-methyl-D-erythritol 4-phosphate + NADP(+) = 1-deoxy-D-xylulose 5-phosphate + NADPH + H(+). Its pathway is isoprenoid biosynthesis; isopentenyl diphosphate biosynthesis via DXP pathway; isopentenyl diphosphate from 1-deoxy-D-xylulose 5-phosphate: step 1/6. In terms of biological role, catalyzes the NADPH-dependent rearrangement and reduction of 1-deoxy-D-xylulose-5-phosphate (DXP) to 2-C-methyl-D-erythritol 4-phosphate (MEP). In Geobacter metallireducens (strain ATCC 53774 / DSM 7210 / GS-15), this protein is 1-deoxy-D-xylulose 5-phosphate reductoisomerase.